Consider the following 534-residue polypeptide: T-complex protein 1 subunit gamma (534 aa).

Met-1 carries the N-acetylmethionine modification. Ser-257 carries the post-translational modification Phosphoserine. Residues Cys-371 and Cys-377 are joined by a disulfide bond.

The protein belongs to the TCP-1 chaperonin family. Heterooligomeric complex of about 850 to 900 kDa that forms two stacked rings, 12 to 16 nm in diameter.

Its subcellular location is the cytoplasm. Its function is as follows. Molecular chaperone; assists the folding of proteins upon ATP hydrolysis. Known to play a role, in vitro, in the folding of actin and tubulin. In yeast may play a role in mitotic spindle formation. The sequence is that of T-complex protein 1 subunit gamma (CCT3) from Saccharomyces cerevisiae (strain ATCC 204508 / S288c) (Baker's yeast).